The chain runs to 941 residues: Bifunctional glutamine synthetase adenylyltransferase/adenylyl-removing enzyme (941 aa).

An adenylyl removase region spans residues 1–431 (MSSAPPFAAA…TFRNAFRLAG (431 aa)). The segment at 447–941 (NGHAMRPHAG…DGTIAQAEVK (495 aa)) is adenylyl transferase.

It belongs to the GlnE family. Mg(2+) is required as a cofactor.

The enzyme catalyses [glutamine synthetase]-O(4)-(5'-adenylyl)-L-tyrosine + phosphate = [glutamine synthetase]-L-tyrosine + ADP. It carries out the reaction [glutamine synthetase]-L-tyrosine + ATP = [glutamine synthetase]-O(4)-(5'-adenylyl)-L-tyrosine + diphosphate. In terms of biological role, involved in the regulation of glutamine synthetase GlnA, a key enzyme in the process to assimilate ammonia. When cellular nitrogen levels are high, the C-terminal adenylyl transferase (AT) inactivates GlnA by covalent transfer of an adenylyl group from ATP to specific tyrosine residue of GlnA, thus reducing its activity. Conversely, when nitrogen levels are low, the N-terminal adenylyl removase (AR) activates GlnA by removing the adenylyl group by phosphorolysis, increasing its activity. The regulatory region of GlnE binds the signal transduction protein PII (GlnB) which indicates the nitrogen status of the cell. This is Bifunctional glutamine synthetase adenylyltransferase/adenylyl-removing enzyme from Bordetella pertussis (strain Tohama I / ATCC BAA-589 / NCTC 13251).